Consider the following 299-residue polypeptide: Myozenin-1 (299 aa).

The interval methionine 1–leucine 34 is disordered. Serine 82 is modified (phosphoserine). The disordered stretch occupies residues glycine 102–glutamate 174. 2 stretches are compositionally biased toward gly residues: residues glycine 112 to glycine 125 and serine 137 to glycine 173.

Belongs to the myozenin family. Interacts with ACTN2, ACTN3, FLNA, FLNB, FLNC, LDB3, PPP3CA and TCAP. Interacts via its C-terminal region with MYOT. As to expression, expressed primarily in skeletal muscle. Detected at lower levels in heart, prostate and pancreas.

Its subcellular location is the nucleus. The protein localises to the cell projection. It localises to the pseudopodium. Functionally, myozenins may serve as intracellular binding proteins involved in linking Z-disk proteins such as alpha-actinin, gamma-filamin, TCAP/telethonin, LDB3/ZASP and localizing calcineurin signaling to the sarcomere. Plays an important role in the modulation of calcineurin signaling. May play a role in myofibrillogenesis. The protein is Myozenin-1 of Homo sapiens (Human).